Reading from the N-terminus, the 271-residue chain is MQDSPVQAVIFDWAGTIVDFGSFAPTSIFVEAFKSGFNFDINLAEAREPMGLGKWQHIEAVGKLPSVNQRWHQQFGHAMTSEEIDHIYATFMPLQKAKVADHAEPILNAIDVVNDLKDKGIKIGSCSGYPREVMDILIPAAAKYGYHPDYVVATDDLPQGGRPAAFMALKNAIELGVTNVSTCIKVDDAAPGIDEGHNAGMWTVGLLLSGNEAGLTYEEYQAADAETLSVAREKARLKLQKSTPHYLIDTIADLPEVIADIETRLLAGERP.

The active-site Nucleophile is D12. Positions 12 and 14 each coordinate Mg(2+). K54 serves as the catalytic Schiff-base intermediate with substrate. D188 contacts Mg(2+).

The protein belongs to the HAD-like hydrolase superfamily. PhnX family. Homodimer. The cofactor is Mg(2+).

The enzyme catalyses phosphonoacetaldehyde + H2O = acetaldehyde + phosphate + H(+). In terms of biological role, involved in phosphonate degradation. This chain is Phosphonoacetaldehyde hydrolase, found in Aliivibrio salmonicida (strain LFI1238) (Vibrio salmonicida (strain LFI1238)).